Here is an 80-residue protein sequence, read N- to C-terminus: Acyl carrier protein (80 aa).

Residues 2 to 77 (SDIEQRVKKI…QAIDYAKAHV (76 aa)) form the Carrier domain. O-(pantetheine 4'-phosphoryl)serine is present on Ser37.

Belongs to the acyl carrier protein (ACP) family. Post-translationally, 4'-phosphopantetheine is transferred from CoA to a specific serine of apo-ACP by AcpS. This modification is essential for activity because fatty acids are bound in thioester linkage to the sulfhydryl of the prosthetic group.

The protein localises to the cytoplasm. Its pathway is lipid metabolism; fatty acid biosynthesis. In terms of biological role, carrier of the growing fatty acid chain in fatty acid biosynthesis. The chain is Acyl carrier protein from Herminiimonas arsenicoxydans.